Reading from the N-terminus, the 159-residue chain is uncharacterized protein (159 aa).

This sequence belongs to the mimivirus L15/L51/R83 family.

This is an uncharacterized protein from Acanthamoeba polyphaga mimivirus (APMV).